Here is a 259-residue protein sequence, read N- to C-terminus: Adenosylcobinamide-GDP ribazoletransferase (259 aa).

6 helical membrane-spanning segments follow: residues 9–29 (NLFFIAMGFFTRIPMPKWIEV), 43–63 (LVGLLVGAISAAVYSLMLYWV), 64–84 (SPSVAIVFAMITSVLVTGGFH), 118–138 (ALALVLALLLKWQLLTELALF), 143–163 (VSLALIVGHCLSRVVAASFIF), and 196–216 (VLALLLVGLVPALVLITGLVI).

Belongs to the CobS family. Mg(2+) is required as a cofactor.

The protein localises to the cell inner membrane. The catalysed reaction is alpha-ribazole + adenosylcob(III)inamide-GDP = adenosylcob(III)alamin + GMP + H(+). The enzyme catalyses alpha-ribazole 5'-phosphate + adenosylcob(III)inamide-GDP = adenosylcob(III)alamin 5'-phosphate + GMP + H(+). It participates in cofactor biosynthesis; adenosylcobalamin biosynthesis; adenosylcobalamin from cob(II)yrinate a,c-diamide: step 7/7. Joins adenosylcobinamide-GDP and alpha-ribazole to generate adenosylcobalamin (Ado-cobalamin). Also synthesizes adenosylcobalamin 5'-phosphate from adenosylcobinamide-GDP and alpha-ribazole 5'-phosphate. The sequence is that of Adenosylcobinamide-GDP ribazoletransferase from Shewanella halifaxensis (strain HAW-EB4).